The sequence spans 74 residues: Mitochondrial import receptor subunit TOM6 homolog (74 aa).

The span at 1–16 (MASSTVPVSAAGSANE) shows a compositional bias: polar residues. Residues 1 to 22 (MASSTVPVSAAGSANETPEIPD) are disordered. A2 carries the N-acetylalanine modification.

Belongs to the Tom6 family. Forms part of the preprotein translocase complex of the outer mitochondrial membrane (TOM complex) which consists of at least 7 different proteins (TOMM5, TOMM6, TOMM7, TOMM20, TOMM22, TOMM40 and TOMM70).

The protein localises to the mitochondrion outer membrane. The chain is Mitochondrial import receptor subunit TOM6 homolog (TOMM6) from Homo sapiens (Human).